We begin with the raw amino-acid sequence, 952 residues long: Ubiquitin carboxyl-terminal hydrolase 15 (952 aa).

Ala2 carries the N-acetylalanine modification. Residues 2–223 (AEGGAADLDT…KNEDGTWPRG (222 aa)) form a mediates interaction with SART3 region. The region spanning 7-118 (ADLDTQRSDI…GQEPIARKVV (112 aa)) is the DUSP domain. The region spanning 260–904 (CGLSNLGNTC…AAYVLFYQRQ (645 aa)) is the USP domain. The Nucleophile role is filled by Cys269. Thr573 is subject to Phosphothreonine. Residues 597-665 (ETDGPLRCCE…GGDNDSENGL (69 aa)) are disordered. Over residues 627 to 644 (METDEPDDESSQDQELPS) the composition is skewed to acidic residues. The Proton acceptor role is filled by His862. The tract at residues 923–952 (SAATGVPLESDEDSNDNDNDLENENCMHTN) is disordered. The span at 931 to 945 (ESDEDSNDNDNDLEN) shows a compositional bias: acidic residues. Ser932 and Ser936 each carry phosphoserine.

This sequence belongs to the peptidase C19 family. As to quaternary structure, a homodimer structure has been reported; however it is unclear whether the protein form a homodimer in vivo. Identified in a complex with the COP9 signalosome complex (CSN). Interacts with SMAD1, SMAD2 and SMAD3; the interaction is direct. Forms a complex with SMURF2 and SMAD7. Interacts with TGFBR1. Interacts with SART3; the interaction is direct. May interact with RNF20 and RNF40. May interact with PRKN. Interacts with INCA1. Post-translationally, phosphorylated. Phosphorylation protects against ubiquitination and subsequent degradation by the proteasome. In terms of processing, ubiquitinated, leading to degradation by the proteasome. In terms of tissue distribution, highly expressed in testis and spleen, and at lower level in other tissues.

Its subcellular location is the cytoplasm. It is found in the nucleus. It localises to the mitochondrion. The enzyme catalyses Thiol-dependent hydrolysis of ester, thioester, amide, peptide and isopeptide bonds formed by the C-terminal Gly of ubiquitin (a 76-residue protein attached to proteins as an intracellular targeting signal).. Its function is as follows. Hydrolase that removes conjugated ubiquitin from target proteins and regulates various pathways such as the TGF-beta receptor signaling, NF-kappa-B and RNF41/NRDP1-PRKN pathways. Acts as a key regulator of TGF-beta receptor signaling pathway, but the precise mechanism is still unclear: according to a report, acts by promoting deubiquitination of monoubiquitinated R-SMADs (SMAD1, SMAD2 and/or SMAD3), thereby alleviating inhibition of R-SMADs and promoting activation of TGF-beta target genes. According to another reports, regulates the TGF-beta receptor signaling pathway by mediating deubiquitination and stabilization of TGFBR1, leading to an enhanced TGF-beta signal. Able to mediate deubiquitination of monoubiquitinated substrates, 'Lys-27'-, 'Lys-48'- and 'Lys-63'-linked polyubiquitin chains. May also regulate gene expression and/or DNA repair through the deubiquitination of histone H2B. Acts as an inhibitor of mitophagy by counteracting the action of parkin (PRKN): hydrolyzes cleavage of 'Lys-48'- and 'Lys-63'-linked polyubiquitin chains attached by parkin on target proteins such as MFN2, thereby reducing parkin's ability to drive mitophagy. Acts as an associated component of COP9 signalosome complex (CSN) and regulates different pathways via this association: regulates NF-kappa-B by mediating deubiquitination of NFKBIA and deubiquitinates substrates bound to VCP. Involved in endosome organization by mediating deubiquitination of SQSTM1: ubiquitinated SQSTM1 forms a molecular bridge that restrains cognate vesicles in the perinuclear region and its deubiquitination releases target vesicles for fast transport into the cell periphery. Acts as a negative regulator of antifungal immunity by mediating 'Lys-27'-linked deubiquitination of CARD9, thereby inactivating CARD9. In Rattus norvegicus (Rat), this protein is Ubiquitin carboxyl-terminal hydrolase 15 (Usp15).